The chain runs to 425 residues: Aromatic prenyl transferase PC-22 (425 aa).

L-tryptophan-binding positions include Gly-83 to Ile-84 and Glu-92. Substrate contacts are provided by Arg-107, Lys-198, Tyr-200, Arg-265, Lys-267, Tyr-269, Tyr-345, Tyr-410, and Tyr-414.

This sequence belongs to the tryptophan dimethylallyltransferase family. In terms of assembly, homodimer.

It participates in secondary metabolite biosynthesis. Aromatic prenyl transferase; part of the gene cluster that mediates the biosynthesis of the indole diterpenes penitrems. The geranylgeranyl diphosphate (GGPP) synthase penG catalyzes the first step in penitrem biosynthesis via conversion of farnesyl pyrophosphate and isopentyl pyrophosphate into geranylgeranyl pyrophosphate (GGPP). Condensation of indole-3-glycerol phosphate with GGPP by the prenyl transferase penC then forms 3-geranylgeranylindole (3-GGI). Epoxidation by the FAD-dependent monooxygenase penM leads to a epoxidized-GGI that is substrate of the terpene cyclase penB for cyclization to yield paspaline. Paspaline is subsequently converted to 13-desoxypaxilline by the cytochrome P450 monooxygenase penP, the latter being then converted to paxilline by the cytochrome P450 monooxygenase penQ. Paxilline is converted to beta-paxitriol via C-10 ketoreduction by the short-chain dehydrogenase PC-15 which can be monoprenylated at the C-20 by the indole diterpene prenyltransferase penD. A two-step elimination (acetylation and elimination) process performed by the O-acetyltransferase PC-16 and the P.simplicissimum ptmI-ortholog not yet identified in P.crustosum, leads to the production of the prenylated form of penijanthine. The FAD-linked oxidoreductase ptmO then converts the prenylated form of penijanthine into PC-M5 which is in turn transformed into PC-M4 by the aromatic dimethylallyltransferase PC-22. A series of oxidation steps involving 4 cytochrome P450 monooxygenases (PC-21, PC-05, PC-23, PC-20) and a FAD-dependent monooxygenase (PC-14) are required for the transformation of PC-M4 to penitrems A and E. Synthesis of these final products is proposed to proceed via penitrems D and C (PC-21, PC-05, PC-14) and penitrems B and F (PC-21, PC-05, PC-14, PC-23). This is Aromatic prenyl transferase PC-22 from Penicillium crustosum (Blue mold fungus).